An 871-amino-acid polypeptide reads, in one-letter code: Synaptonemal complex protein 1 (871 aa).

The segment at 1-40 is disordered; the sequence is MQKLGFPAMKSLDKPRSLSGSANMYSFSNRKPPDSVSSGS. The segment covering 18-40 has biased composition (polar residues); it reads LSGSANMYSFSNRKPPDSVSSGS. 2 coiled-coil regions span residues 58–304 and 331–608; these read MRTD…DKKN and LALD…EESK. 2 disordered regions span residues 708 to 741 and 778 to 871; these read VMSD…RSEH and SVLS…YAFD. Over residues 719-728 the composition is skewed to polar residues; sequence VNSNKNYSIS. The segment covering 729–741 has biased composition (basic and acidic residues); it reads KDSRLGGSKRSEH. Residues 831–847 are compositionally biased toward polar residues; sequence LTPQSIAKGTGMTSHAR.

It localises to the nucleus. Functionally, required for chromosome synapsis and normal fidelity of crossing over. The sequence is that of Synaptonemal complex protein 1 (ZYP1A) from Arabidopsis thaliana (Mouse-ear cress).